Consider the following 147-residue polypeptide: Hemoglobin subunit beta (147 aa).

The Globin domain maps to 3–147; sequence HWTAEEKQLI…VAHALARKYH (145 aa). Histidine 64 and histidine 93 together coordinate heme b.

It belongs to the globin family. Heterotetramer of two alpha chains and two beta chains. In terms of tissue distribution, red blood cells.

Involved in oxygen transport from the lung to the various peripheral tissues. This is Hemoglobin subunit beta (HBB) from Anas platyrhynchos (Mallard).